We begin with the raw amino-acid sequence, 41 residues long: uncharacterized protein (41 aa).

Residues Ile8–Phe28 traverse the membrane as a helical segment.

It is found in the membrane. This is an uncharacterized protein from Streptococcus pneumoniae serotype 2 (strain D39 / NCTC 7466).